The sequence spans 165 residues: Acireductone dioxygenase (165 aa).

Residues histidine 90, histidine 92, glutamate 96, and histidine 134 each contribute to the Fe(2+) site. The Ni(2+) site is built by histidine 90, histidine 92, glutamate 96, and histidine 134.

The protein belongs to the acireductone dioxygenase (ARD) family. As to quaternary structure, monomer. It depends on Fe(2+) as a cofactor. The cofactor is Ni(2+).

It catalyses the reaction 1,2-dihydroxy-5-(methylsulfanyl)pent-1-en-3-one + O2 = 3-(methylsulfanyl)propanoate + CO + formate + 2 H(+). It carries out the reaction 1,2-dihydroxy-5-(methylsulfanyl)pent-1-en-3-one + O2 = 4-methylsulfanyl-2-oxobutanoate + formate + 2 H(+). Its pathway is amino-acid biosynthesis; L-methionine biosynthesis via salvage pathway; L-methionine from S-methyl-5-thio-alpha-D-ribose 1-phosphate: step 5/6. Its function is as follows. Catalyzes 2 different reactions between oxygen and the acireductone 1,2-dihydroxy-3-keto-5-methylthiopentene (DHK-MTPene) depending upon the metal bound in the active site. Fe-containing acireductone dioxygenase (Fe-ARD) produces formate and 2-keto-4-methylthiobutyrate (KMTB), the alpha-ketoacid precursor of methionine in the methionine recycle pathway. Ni-containing acireductone dioxygenase (Ni-ARD) produces methylthiopropionate, carbon monoxide and formate, and does not lie on the methionine recycle pathway. The sequence is that of Acireductone dioxygenase from Rhodopseudomonas palustris (strain TIE-1).